The following is a 206-amino-acid chain: ATP phosphoribosyltransferase (206 aa).

This sequence belongs to the ATP phosphoribosyltransferase family. Short subfamily. In terms of assembly, heteromultimer composed of HisG and HisZ subunits.

It is found in the cytoplasm. It catalyses the reaction 1-(5-phospho-beta-D-ribosyl)-ATP + diphosphate = 5-phospho-alpha-D-ribose 1-diphosphate + ATP. The protein operates within amino-acid biosynthesis; L-histidine biosynthesis; L-histidine from 5-phospho-alpha-D-ribose 1-diphosphate: step 1/9. Its function is as follows. Catalyzes the condensation of ATP and 5-phosphoribose 1-diphosphate to form N'-(5'-phosphoribosyl)-ATP (PR-ATP). Has a crucial role in the pathway because the rate of histidine biosynthesis seems to be controlled primarily by regulation of HisG enzymatic activity. This chain is ATP phosphoribosyltransferase, found in Leptospira interrogans serogroup Icterohaemorrhagiae serovar copenhageni (strain Fiocruz L1-130).